Reading from the N-terminus, the 297-residue chain is Probable deoxyhypusine synthase (297 aa).

Lysine 265 functions as the Nucleophile in the catalytic mechanism.

Belongs to the deoxyhypusine synthase family. The cofactor is NAD(+).

The catalysed reaction is [eIF5A protein]-L-lysine + spermidine = [eIF5A protein]-deoxyhypusine + propane-1,3-diamine. It participates in protein modification; eIF5A hypusination. Functionally, catalyzes the NAD-dependent oxidative cleavage of spermidine and the subsequent transfer of the butylamine moiety of spermidine to the epsilon-amino group of a specific lysine residue of the eIF-5A precursor protein to form the intermediate deoxyhypusine residue. This is Probable deoxyhypusine synthase from Methanopyrus kandleri (strain AV19 / DSM 6324 / JCM 9639 / NBRC 100938).